The primary structure comprises 200 residues: Phospholipase A2 inhibitor CgMIP-I (200 aa).

Residues 1-19 (MKYLHTICLLFIFVARGNS) form the signal peptide. 7 disulfides stabilise this stretch: cysteine 22–cysteine 46, cysteine 25–cysteine 32, cysteine 39–cysteine 67, cysteine 73–cysteine 94, cysteine 95–cysteine 100, cysteine 118–cysteine 143, and cysteine 136–cysteine 165. An N-linked (GlcNAc...) asparagine glycan is attached at asparagine 176.

The protein belongs to the CNF-like-inhibitor family. In terms of assembly, homomer of 110 kDa composed of 20-25-kDa subunits. Post-translationally, N-glycosylated. The glycosidic chain may contain superficial sialic acid residues. As to expression, expressed by the liver.

The protein localises to the secreted. Its function is as follows. Inhibits the enzymatic activity of basic phospholipase A2. Specifically neutralizes PLA2, myotoxic, edema-forming, cytolytic, and anti-coagulant activities, as well as intracerebral lethal effect of the basic myotoxin I from the same venom (AC P0DQP6), crotoxin heterodimer and crotoxin subunit B alone. Does not block the enzymatic activity of crude acidic PLA2 fractions from the same venom. The protein is Phospholipase A2 inhibitor CgMIP-I of Cerrophidion godmani (Porthidium godmani).